The following is a 379-amino-acid chain: Chaperone protein DnaJ (379 aa).

Positions 5–70 constitute a J domain; sequence DYYEILGLDK…QKKAQYDQFG (66 aa). The CR-type zinc finger occupies 135–217; sequence GVEKEISVTR…CRGKGIVRKH (83 aa). Positions 148, 151, 165, 168, 191, 194, 205, and 208 each coordinate Zn(2+). 4 CXXCXGXG motif repeats span residues 148–155, 165–172, 191–198, and 205–212; these read CETCNGTG, CDKCNGTG, CDKCGGRG, and CEECRGKG.

The protein belongs to the DnaJ family. Homodimer. Requires Zn(2+) as cofactor.

The protein resides in the cytoplasm. Participates actively in the response to hyperosmotic and heat shock by preventing the aggregation of stress-denatured proteins and by disaggregating proteins, also in an autonomous, DnaK-independent fashion. Unfolded proteins bind initially to DnaJ; upon interaction with the DnaJ-bound protein, DnaK hydrolyzes its bound ATP, resulting in the formation of a stable complex. GrpE releases ADP from DnaK; ATP binding to DnaK triggers the release of the substrate protein, thus completing the reaction cycle. Several rounds of ATP-dependent interactions between DnaJ, DnaK and GrpE are required for fully efficient folding. Also involved, together with DnaK and GrpE, in the DNA replication of plasmids through activation of initiation proteins. The chain is Chaperone protein DnaJ from Clostridium kluyveri (strain ATCC 8527 / DSM 555 / NBRC 12016 / NCIMB 10680 / K1).